A 193-amino-acid polypeptide reads, in one-letter code: ATP-dependent Clp protease proteolytic subunit 1 (193 aa).

The active-site Nucleophile is Ser99. Residue His124 is part of the active site.

Belongs to the peptidase S14 family. As to quaternary structure, fourteen ClpP subunits assemble into 2 heptameric rings which stack back to back to give a disk-like structure with a central cavity, resembling the structure of eukaryotic proteasomes.

It is found in the cytoplasm. It carries out the reaction Hydrolysis of proteins to small peptides in the presence of ATP and magnesium. alpha-casein is the usual test substrate. In the absence of ATP, only oligopeptides shorter than five residues are hydrolyzed (such as succinyl-Leu-Tyr-|-NHMec, and Leu-Tyr-Leu-|-Tyr-Trp, in which cleavage of the -Tyr-|-Leu- and -Tyr-|-Trp bonds also occurs).. Cleaves peptides in various proteins in a process that requires ATP hydrolysis. Has a chymotrypsin-like activity. Plays a major role in the degradation of misfolded proteins. The polypeptide is ATP-dependent Clp protease proteolytic subunit 1 (Shouchella clausii (strain KSM-K16) (Alkalihalobacillus clausii)).